A 91-amino-acid chain; its full sequence is Non-structural protein 3a (91 aa).

The signal sequence occupies residues 1 to 19 (MVSFNATAILLVLVANAFS).

The polypeptide is Non-structural protein 3a (Tylonycteris pachypus (Lesser bamboo bat)).